The sequence spans 588 residues: Hyaluronan synthase 1 (588 aa).

At 1 to 28 the chain is on the cytoplasmic side; sequence MKEKAAETMEIPEGIPKDLEPKHPTLWR. Residues 29 to 49 traverse the membrane as a helical segment; it reads IIYYSFGVVLLATITAAYVAE. Topologically, residues 50-61 are extracellular; it reads FQVLKHEAILFS. A helical transmembrane segment spans residues 62-82; that stretch reads LGLYGLAMLLHLMMQSLFAFL. Residues 83 to 411 are Cytoplasmic-facing; it reads EIRRVNKSEL…IWMTYESVVS (329 aa). The helical transmembrane segment at 412-432 threads the bilayer; sequence FIFPFFITATVIRLIYAGTIW. Residue Asn-433 is a topological domain, extracellular. The chain crosses the membrane as a helical span at residues 434 to 454; it reads VVWLLLCIQIMSLFKSIYACW. The Cytoplasmic segment spans residues 455-456; sequence LR. Residues 457-477 traverse the membrane as a helical segment; sequence GNFIMLLMSLYSMLYMTGLLP. The Extracellular portion of the chain corresponds to 478 to 505; that stretch reads SKYFALLTLNKTGWGTSGRKKIVGNYMP. Residues 506 to 526 traverse the membrane as a helical segment; it reads ILPLSIWAAVLCGGVGYSIYM. The Cytoplasmic portion of the chain corresponds to 527–543; it reads DCQNDWSTPEKQKEMYH. Residues 544-564 form a helical membrane-spanning segment; it reads LLYGCVGYVMYWVIMAVMYWV. Residues 565–588 are Extracellular-facing; sequence WVKRCCRKRSQTVTLVHDIPDMCV.

This sequence belongs to the NodC/HAS family. The cofactor is Mg(2+). In terms of tissue distribution, expression moves as a gradient through the embryo. The mRNA is first expressed in the animal region of the blastula, and by early gastrula is found everywhere except in the outer layer of the dorsal blastopore lip. By mid-gastrula, protein is present in the inner ectodermal layer and the endoderm, then disappears from dorsal ectoderm as the neural plate is induced and later decays in a dorsoventral direction. Last expressed in ventral regions of the gut at the tailbud stage (at protein level).

It localises to the membrane. The catalysed reaction is [hyaluronan](n) + UDP-N-acetyl-alpha-D-glucosamine = N-acetyl-beta-D-glucosaminyl-(1-&gt;4)-[hyaluronan](n) + UDP + H(+). The enzyme catalyses N-acetyl-beta-D-glucosaminyl-(1-&gt;4)-[hyaluronan](n) + UDP-alpha-D-glucuronate = [hyaluronan](n+1) + UDP + H(+). Its pathway is glycan biosynthesis; hyaluronan biosynthesis. Catalyzes the addition of GlcNAc or GlcUA monosaccharides to the nascent hyaluronan polymer. Therefore, it is essential to hyaluronan synthesis a major component of most extracellular matrices that has a structural role in tissues architectures and regulates cell adhesion, migration and differentiation. Also able to catalyze the synthesis of chito-oligosaccharide depending on the substrate. The sequence is that of Hyaluronan synthase 1 (has1) from Xenopus laevis (African clawed frog).